The chain runs to 473 residues: Serine incorporator 3 (473 aa).

The Extracellular segment spans residues 1-96 (MGAVLGVFSL…KDCDVLVGYK (96 aa)). Residue Asn-34 is glycosylated (N-linked (GlcNAc...) asparagine). Residues 97–117 (AVYRISFAMAIFFFVFSLLMF) form a helical membrane-spanning segment. The Cytoplasmic portion of the chain corresponds to 118–132 (KVKTSKDLRAAVHNG). The helical transmembrane segment at 133-153 (FWFFKIAALIGIMVGSFYIPG) threads the bilayer. Residues 154–159 (GYFSSV) lie on the Extracellular side of the membrane. Residues 160-180 (WFVVGMIGAALFILIQLVLLV) traverse the membrane as a helical segment. The Cytoplasmic portion of the chain corresponds to 181–203 (DFAHSWNESWVNRMEEGNPRLWY). The chain crosses the membrane as a helical span at residues 204-224 (AALLSFTSAFYILSIICVGLL). Over 225–239 (YTYYTKPDGCTENKF) the chain is Extracellular. The helical transmembrane segment at 240-260 (FISINLILCVVASIISIHPKI) threads the bilayer. The Cytoplasmic segment spans residues 261–329 (QEHQPRSGLL…VPTPTPPSKS (69 aa)). Residues 330 to 350 (GSLLDSDNFIGLFVFVLCLLY) form a helical membrane-spanning segment. Topologically, residues 351-406 (SSIRTSTNSQVDKLTLSGSDSVILGDTTTSGASDEEDGQPRRAVDNEKEGVQYSYS) are extracellular. Phosphoserine is present on Ser-371. The chain crosses the membrane as a helical span at residues 407-427 (LFHLMLCLASLYIMMTLTSWY). Topologically, residues 428 to 446 (SPDAKFQSMTSKWPAVWVK) are cytoplasmic. Residues 447 to 467 (ISSSWVCLLLYVWTLVAPLVL) form a helical membrane-spanning segment. Residues 468-473 (TSRDFS) lie on the Extracellular side of the membrane.

It belongs to the TDE1 family. In terms of processing, N-glycosylated. As to expression, ubiquitous. Expression levels were increased fourfold to tenfold in lung tumor tissues compared with normal pulmonary tissues.

Its subcellular location is the cell membrane. The protein resides in the golgi apparatus membrane. The protein localises to the cytoplasm. It localises to the perinuclear region. It catalyses the reaction a 1,2-diacyl-sn-glycero-3-phospho-L-serine(in) = a 1,2-diacyl-sn-glycero-3-phospho-L-serine(out). It carries out the reaction a 1,2-diacyl-sn-glycero-3-phosphocholine(in) = a 1,2-diacyl-sn-glycero-3-phosphocholine(out). The catalysed reaction is a 1,2-diacyl-sn-glycero-3-phosphoethanolamine(in) = a 1,2-diacyl-sn-glycero-3-phosphoethanolamine(out). In terms of biological role, restriction factor required to restrict infectivity of lentiviruses, such as HIV-1: acts by inhibiting an early step of viral infection. Impairs the penetration of the viral particle into the cytoplasm. Non-ATP-dependent, non-specific lipid transporter for phosphatidylserine, phosphatidylcholine, and phosphatidylethanolamine. Functions as a scramblase that flips lipids in both directions across the membrane. Phospholipid scrambling results in HIV-1 surface exposure of phosphatidylserine and loss of membrane asymmetry, which leads to changes in HIV-1 Env conformation and loss of infectivity. This Homo sapiens (Human) protein is Serine incorporator 3.